We begin with the raw amino-acid sequence, 600 residues long: Glutamine--fructose-6-phosphate aminotransferase [isomerizing] (600 aa).

Cysteine 2 functions as the Nucleophile; for GATase activity in the catalytic mechanism. Residues 2 to 217 enclose the Glutamine amidotransferase type-2 domain; sequence CGIVGYIGQL…DKEMVIVTDD (216 aa). SIS domains are found at residues 283-422 and 452-590; these read IAAA…KNGI and IARE…VDKP. Lysine 595 (for Fru-6P isomerization activity) is an active-site residue.

In terms of assembly, homodimer.

It is found in the cytoplasm. The catalysed reaction is D-fructose 6-phosphate + L-glutamine = D-glucosamine 6-phosphate + L-glutamate. Its function is as follows. Catalyzes the first step in hexosamine metabolism, converting fructose-6P into glucosamine-6P using glutamine as a nitrogen source. The protein is Glutamine--fructose-6-phosphate aminotransferase [isomerizing] of Bacillus subtilis (strain 168).